Consider the following 82-residue polypeptide: MVTIRLARGGAKKRPFYQVVVTDSRNARDGRFIERVGFYNPLATGNAEELRLDVDRVEHWVAQGATVSERVAGLIKSAKKSA.

It belongs to the bacterial ribosomal protein bS16 family.

The sequence is that of Small ribosomal subunit protein bS16 from Proteus mirabilis (strain HI4320).